Consider the following 294-residue polypeptide: Cytidine deaminase (294 aa).

2 consecutive CMP/dCMP-type deaminase domains span residues 48–168 and 186–294; these read DEDA…FGPK and LTGN…VLLG. Substrate is bound at residue 89 to 91; it reads NME. Residue histidine 102 participates in Zn(2+) binding. Catalysis depends on glutamate 104, which acts as the Proton donor. 2 residues coordinate Zn(2+): cysteine 129 and cysteine 132.

It belongs to the cytidine and deoxycytidylate deaminase family. Homodimer. It depends on Zn(2+) as a cofactor.

The catalysed reaction is cytidine + H2O + H(+) = uridine + NH4(+). It catalyses the reaction 2'-deoxycytidine + H2O + H(+) = 2'-deoxyuridine + NH4(+). Functionally, this enzyme scavenges exogenous and endogenous cytidine and 2'-deoxycytidine for UMP synthesis. This chain is Cytidine deaminase, found in Salmonella typhi.